The sequence spans 293 residues: Mediator of RNA polymerase II transcription subunit 27 (293 aa).

It belongs to the Mediator complex subunit 27 family. Component of the Mediator complex, which includes at least CDK8, MED4, MED6, MED11, MED14, MED17, MED18, MED20, MED21, MED22, MED27, MED28, MED30 and MED31.

The protein localises to the nucleus. Component of the Mediator complex, a coactivator involved in the regulated transcription of nearly all RNA polymerase II-dependent genes. Mediator functions as a bridge to convey information from gene-specific regulatory proteins to the basal RNA polymerase II transcription machinery. Mediator is recruited to promoters by direct interactions with regulatory proteins and serves as a scaffold for the assembly of a functional preinitiation complex with RNA polymerase II and the general transcription factors. Required for activated transcription of the MtnA gene. The polypeptide is Mediator of RNA polymerase II transcription subunit 27 (MED27) (Drosophila melanogaster (Fruit fly)).